The primary structure comprises 500 residues: Arabinofuranosidase/B-xylosidase (500 aa).

Residues 1-21 (MLSNARIIAAGCIAAGSLVAA) form the signal peptide. Residue Asn467 is glycosylated (N-linked (GlcNAc...) asparagine).

It belongs to the glycosyl hydrolase 54 family.

The enzyme catalyses Hydrolysis of terminal non-reducing alpha-L-arabinofuranoside residues in alpha-L-arabinosides.. It carries out the reaction Hydrolysis of (1-&gt;4)-beta-D-xylans, to remove successive D-xylose residues from the non-reducing termini.. The sequence is that of Arabinofuranosidase/B-xylosidase (xyl1) from Trichoderma koningii (Hypocrea koningii).